Consider the following 587-residue polypeptide: MASKKREVQLQSVVNSQNLWDEMLLNKGLTVIDVYQAWCGPCKAVQALFRKLKNELNEDELLHFVVAEADSIVTLQPFRDKCEPVFLFSLNGKIIAKIQGANAPLINRKVIALIDEEKKIAAGEMARPQYVEIPLVDSLDEEYGEVHYESNVEVYNMAVINPDAVLMRKNLEIKEKITKEGFIIEIQENMLLPEEVAREFYNHMIDEPDFEEFVYSMTNRLSCVLIISQGEDTEVIEEEALPQSDDEEEPDPLEEPHVRFAPMLVKKKRDSLQEYMDRQHMSDYCHVEDDAVKVSKFIDILFPDFKTMKSTNVQRTLGLLYPEVCEEEKDNVLDIIQNEGFTILMQRQVVLSEEEARAVCHVHEDEDYFDNLIGYMCSNNSYILVLMREHSVERWKELIGPKTVEEAYASHPDSLCVRFASGNFPVNQFYGSSSKAAAETEIEHFFPPQSTLALIKPHVSHKERMEILKAIRDARFELTQMKEMHLTPEHASKVYFKITGKDFYKNVLDVLSSGMSVVMILTKWNAVGEWRRMMGPVDPEEAKLLSPNSLRARYGIDVLRNAVHGASNMSEAATAISNVFTESNFEN.

The Thioredoxin domain maps to 2-119; it reads ASKKREVQLQ…VIALIDEEKK (118 aa). A disulfide bridge connects residues cysteine 39 and cysteine 42. 3 NDK regions span residues 157 to 255, 313 to 453, and 454 to 587; these read MAVI…PLEE, VQRT…STLA, and LIKP…NFEN.

It in the C-terminal section; belongs to the NDK family. As to quaternary structure, monomer. Testis-specific.

It localises to the cytoplasm. In terms of biological role, probably required during the final stages of sperm tail maturation in the testis and/or epididymis, where extensive disulfide bonding of fibrous sheath (FS) proteins occurs. In vitro, it has neither nucleoside diphosphate kinase (NDPK) activity nor reducing activity on disulfide bonds. Exhibits a 3'-5' exonuclease activity with a preference for single-stranded DNA, suggesting roles in DNA proofreading and repair. The chain is Thioredoxin domain-containing protein 3 (Nme8) from Rattus norvegicus (Rat).